A 382-amino-acid polypeptide reads, in one-letter code: GDP-mannose 4,6 dehydratase 2 (382 aa).

NADP(+) is bound by residues 40–45, 97–98, 119–123, and Y134; these read GITGQD, DM, and LAAQS. The active site involves T166. Catalysis depends on nucleophile residues E168 and Y190. Residues K194, H220, and R225 each coordinate NADP(+).

The protein belongs to the NAD(P)-dependent epimerase/dehydratase family. GDP-mannose 4,6-dehydratase subfamily. Requires NADP(+) as cofactor.

It carries out the reaction GDP-alpha-D-mannose = GDP-4-dehydro-alpha-D-rhamnose + H2O. Its pathway is nucleotide-sugar biosynthesis; GDP-L-fucose biosynthesis via de novo pathway; GDP-L-fucose from GDP-alpha-D-mannose: step 1/2. In terms of biological role, catalyzes the conversion of GDP-D-mannose to GDP-4-dehydro-6-deoxy-D-mannose. The sequence is that of GDP-mannose 4,6 dehydratase 2 (gmd-2) from Caenorhabditis elegans.